The primary structure comprises 64 residues: Translation machinery-associated protein 7 (64 aa).

Disordered regions lie at residues 1–38 (MSSRQGGKMKPLKQKKKQQQDLDPEDIAFKEKQKADAA) and 45–64 (ANMKSGKPLVGGGIKKSGKK). Residues 27–38 (IAFKEKQKADAA) are compositionally biased toward basic and acidic residues. Positions 53–64 (LVGGGIKKSGKK) are enriched in gly residues.

Belongs to the TMA7 family. As to quaternary structure, interacts with the 40S ribosomal subunit.

It is found in the cytoplasm. The protein localises to the nucleus. In terms of biological role, involved in protein synthesis. In Saccharomyces cerevisiae (strain ATCC 204508 / S288c) (Baker's yeast), this protein is Translation machinery-associated protein 7 (TMA7).